A 233-amino-acid polypeptide reads, in one-letter code: Adapter protein MecA (233 aa).

Belongs to the MecA family. As to quaternary structure, homodimer.

Its function is as follows. Enables the recognition and targeting of unfolded and aggregated proteins to the ClpC protease or to other proteins involved in proteolysis. In Lactococcus lactis subsp. lactis (strain IL1403) (Streptococcus lactis), this protein is Adapter protein MecA.